We begin with the raw amino-acid sequence, 377 residues long: 8-amino-7-oxononanoate synthase (377 aa).

Arg13 provides a ligand contact to substrate. 100–101 contacts pyridoxal 5'-phosphate; the sequence is GY. His125 contributes to the substrate binding site. 3 residues coordinate pyridoxal 5'-phosphate: Ser171, His199, and Thr228. Lys231 carries the N6-(pyridoxal phosphate)lysine modification. A substrate-binding site is contributed by Thr345.

This sequence belongs to the class-II pyridoxal-phosphate-dependent aminotransferase family. BioF subfamily. As to quaternary structure, homodimer. It depends on pyridoxal 5'-phosphate as a cofactor.

It catalyses the reaction 6-carboxyhexanoyl-[ACP] + L-alanine + H(+) = (8S)-8-amino-7-oxononanoate + holo-[ACP] + CO2. It functions in the pathway cofactor biosynthesis; biotin biosynthesis. Catalyzes the decarboxylative condensation of pimeloyl-[acyl-carrier protein] and L-alanine to produce 8-amino-7-oxononanoate (AON), [acyl-carrier protein], and carbon dioxide. In Nitrosococcus oceani (strain ATCC 19707 / BCRC 17464 / JCM 30415 / NCIMB 11848 / C-107), this protein is 8-amino-7-oxononanoate synthase.